The chain runs to 287 residues: MAGAKEIRSKIASVQNTQKITKAMEMVAASKMRKSQERMAASRPYAETMRKVIGHLALGNLEYKHPYLDERDVKRVGYLVVSTDRGLCGGLNINLFKRLLAEMKGWSEKGVETDLALIGSKAASFFGSVGGNVVAQVTGMGDNPSLSELIGPVKVMLQAYDEGRLDKLYIVSNKFINTMSQEPQIVQLLPLPPAEDGELKKKSWDYLYEPDPKVLLDTLLRRYVESQVYQGVVENLASEQAARMVAMKAATDNGGSLIKELQLVYNKARQASITQELTEIVSGASAV.

The protein belongs to the ATPase gamma chain family. In terms of assembly, F-type ATPases have 2 components, CF(1) - the catalytic core - and CF(0) - the membrane proton channel. CF(1) has five subunits: alpha(3), beta(3), gamma(1), delta(1), epsilon(1). CF(0) has three main subunits: a, b and c.

The protein localises to the cell inner membrane. Produces ATP from ADP in the presence of a proton gradient across the membrane. The gamma chain is believed to be important in regulating ATPase activity and the flow of protons through the CF(0) complex. This Serratia proteamaculans (strain 568) protein is ATP synthase gamma chain.